We begin with the raw amino-acid sequence, 515 residues long: Protein FAM98A (515 aa).

Disordered stretches follow at residues 297–411 (VLMG…YHGG) and 432–515 (SGYQ…HYTS). Residues 302–311 (VPDRGGRPNE) are compositionally biased toward basic and acidic residues. A compositionally biased stretch (gly residues) spans 382 to 395 (WTDGGSASGGGYQD). Basic and acidic residues predominate over residues 444-456 (RYQDGGHHGERGS). The span at 457-481 (GRGGRGGRGGRGGRGSQGGGWGGRG) shows a compositional bias: gly residues. Over residues 485–501 (YHQGGQFEQHFQHGGYQ) the composition is skewed to low complexity. The span at 502-515 (YSHSGFGQGRHYTS) shows a compositional bias: polar residues.

The protein belongs to the FAM98 family. In terms of assembly, interacts (via N- and C-terminus) with DDX1. Interacts (via N- and C-terminus) with C14orf166. Interacts with FAM98B. Interacts with PLEKHM1 (via N- and C-terminus).

In terms of biological role, positively stimulates PRMT1-induced protein arginine methylation. Involved in skeletal homeostasis. Positively regulates lysosome peripheral distribution and ruffled border formation in osteoclasts. The chain is Protein FAM98A from Rattus norvegicus (Rat).